The chain runs to 782 residues: uncharacterized protein (782 aa).

2 disordered regions span residues 1 to 25 (MFSP…STTS) and 175 to 195 (RPRT…EDLR). The span at 13-25 (ESESVSNCESTTS) shows a compositional bias: low complexity. Positions 183–195 (RAGDASMSREDLR) are enriched in basic and acidic residues. Coiled-coil stretches lie at residues 223–331 (RENR…STLN), 348–398 (LSQF…VSTL), 428–601 (NRIN…QLLN), and 699–743 (TIET…IIAK). Residues 748 to 782 (NIPKTEKSSPMKKVPPIENFRAKSQTSITGLSPVL) form a disordered region. Residues 769-782 (AKSQTSITGLSPVL) show a composition bias toward polar residues.

This is an uncharacterized protein from Caenorhabditis elegans.